Here is a 276-residue protein sequence, read N- to C-terminus: Undecaprenyl-diphosphatase (276 aa).

The next 8 helical transmembrane spans lie at 2–22 (LEILKAVILGIVEGITEFLPI), 43–63 (FIDMFNVVIQLGAIMAVVVLY), 83–103 (WTLWKKVIIAVIPSVIIGLPL), 111–131 (LMNWLVVSIALIVYGVLFIVI), 147–167 (TLPYKVAILIGCFQILSLIPG), 186–206 (YVAAEFSFFLAIPTMFGASLL), 224–244 (LILAVGVIVSFVVAYASIRFL), and 255–275 (AFGWYRIILGVIVIAYFALLA).

Belongs to the UppP family.

Its subcellular location is the cell membrane. It carries out the reaction di-trans,octa-cis-undecaprenyl diphosphate + H2O = di-trans,octa-cis-undecaprenyl phosphate + phosphate + H(+). Its function is as follows. Catalyzes the dephosphorylation of undecaprenyl diphosphate (UPP). Confers resistance to bacitracin. The polypeptide is Undecaprenyl-diphosphatase (Limosilactobacillus fermentum (strain NBRC 3956 / LMG 18251) (Lactobacillus fermentum)).